A 226-amino-acid chain; its full sequence is ATP synthase subunit a (226 aa).

6 helical membrane passes run 17 to 37 (FSYF…AMMA), 79 to 99 (LVAT…IPGF), 105 to 125 (SLNL…FEGI), 134 to 154 (FAHF…IEIV), 176 to 196 (LFLM…AYVL), and 199 to 219 (FMAF…LAGA).

Belongs to the ATPase A chain family. As to quaternary structure, F-type ATPases have 2 components, CF(1) - the catalytic core - and CF(0) - the membrane proton channel. CF(1) has five subunits: alpha(3), beta(3), gamma(1), delta(1), epsilon(1). CF(0) has three main subunits: a(1), b(2) and c(9-12). The alpha and beta chains form an alternating ring which encloses part of the gamma chain. CF(1) is attached to CF(0) by a central stalk formed by the gamma and epsilon chains, while a peripheral stalk is formed by the delta and b chains.

The protein localises to the cell inner membrane. Functionally, key component of the proton channel; it plays a direct role in the translocation of protons across the membrane. This chain is ATP synthase subunit a, found in Campylobacter jejuni subsp. jejuni serotype O:23/36 (strain 81-176).